Reading from the N-terminus, the 207-residue chain is MYKNYNDVTESPRNALIPMVVEQTAKGERSYDIYSRLLKERVIFLTGQVEDHMANLVVAQLLFLESENPDQDISIYINSPGGAVTAGMSIYDTMQFIKPDVSTVCMGQACSMGAFLLAGGAKGKRFCLPSARVMIHQPLGGFQGQASDIQIHAQEILKIKNTLNERLAFHTGQEMATIERDTDRDNFMSADQAVAYGLVDGILSQRG.

S111 acts as the Nucleophile in catalysis. Residue H136 is part of the active site.

This sequence belongs to the peptidase S14 family. As to quaternary structure, fourteen ClpP subunits assemble into 2 heptameric rings which stack back to back to give a disk-like structure with a central cavity, resembling the structure of eukaryotic proteasomes.

Its subcellular location is the cytoplasm. It catalyses the reaction Hydrolysis of proteins to small peptides in the presence of ATP and magnesium. alpha-casein is the usual test substrate. In the absence of ATP, only oligopeptides shorter than five residues are hydrolyzed (such as succinyl-Leu-Tyr-|-NHMec, and Leu-Tyr-Leu-|-Tyr-Trp, in which cleavage of the -Tyr-|-Leu- and -Tyr-|-Trp bonds also occurs).. Functionally, cleaves peptides in various proteins in a process that requires ATP hydrolysis. Has a chymotrypsin-like activity. Plays a major role in the degradation of misfolded proteins. This is ATP-dependent Clp protease proteolytic subunit from Aeromonas salmonicida (strain A449).